Reading from the N-terminus, the 319-residue chain is Ribonucleoside-diphosphate reductase 2 subunit beta (319 aa).

Residues Asp67, Glu98, and His101 each contribute to the Fe cation site. Residue Tyr105 is part of the active site. Positions 158, 192, and 195 each coordinate Fe cation.

The protein belongs to the ribonucleoside diphosphate reductase small chain family. Tetramer of two alpha and two beta subunits. Requires Fe cation as cofactor.

It carries out the reaction a 2'-deoxyribonucleoside 5'-diphosphate + [thioredoxin]-disulfide + H2O = a ribonucleoside 5'-diphosphate + [thioredoxin]-dithiol. In terms of biological role, provides the precursors necessary for DNA synthesis. Catalyzes the biosynthesis of deoxyribonucleotides from the corresponding ribonucleotides. R2F contains the tyrosyl radical required for catalysis. The protein is Ribonucleoside-diphosphate reductase 2 subunit beta (nrdF) of Salmonella typhimurium (strain LT2 / SGSC1412 / ATCC 700720).